The sequence spans 203 residues: MSRYTGPSWKQSRRLGLSLTGTGKELARRNYVPGQHGPNNRSKLSEYGLQLAEKQKLRFSYGLGEKQFRNLFVQATKIKEGTLGFNFMVLLERRLDNVVYRLGLATTRRQARQFVNHGHILVDGKRVDIPSYRVDPGQVISVREKSMKVPAILEAVEATLGRPAFVSFDAEKLEGALTRLPERDEINPEINEALVVEFYNKML.

Residues 93–156 enclose the S4 RNA-binding domain; it reads RRLDNVVYRL…MKVPAILEAV (64 aa).

Belongs to the universal ribosomal protein uS4 family. As to quaternary structure, part of the 30S ribosomal subunit. Contacts protein S5. The interaction surface between S4 and S5 is involved in control of translational fidelity.

Functionally, one of the primary rRNA binding proteins, it binds directly to 16S rRNA where it nucleates assembly of the body of the 30S subunit. Its function is as follows. With S5 and S12 plays an important role in translational accuracy. This is Small ribosomal subunit protein uS4 from Streptococcus pyogenes serotype M4 (strain MGAS10750).